Reading from the N-terminus, the 436-residue chain is Glutamyl-tRNA reductase (436 aa).

Residues T49–R52, S109, E114–Q116, and Q120 contribute to the substrate site. C50 serves as the catalytic Nucleophile. G198–S203 is a binding site for NADP(+).

The protein belongs to the glutamyl-tRNA reductase family. Homodimer.

It carries out the reaction (S)-4-amino-5-oxopentanoate + tRNA(Glu) + NADP(+) = L-glutamyl-tRNA(Glu) + NADPH + H(+). It participates in porphyrin-containing compound metabolism; protoporphyrin-IX biosynthesis; 5-aminolevulinate from L-glutamyl-tRNA(Glu): step 1/2. It functions in the pathway porphyrin-containing compound metabolism; chlorophyll biosynthesis. Functionally, catalyzes the NADPH-dependent reduction of glutamyl-tRNA(Glu) to glutamate 1-semialdehyde (GSA). In Prochlorococcus marinus (strain MIT 9301), this protein is Glutamyl-tRNA reductase.